A 396-amino-acid polypeptide reads, in one-letter code: NADH-quinone oxidoreductase subunit D (396 aa).

The protein belongs to the complex I 49 kDa subunit family. In terms of assembly, NDH-1 is composed of 14 different subunits. Subunits NuoB, C, D, E, F, and G constitute the peripheral sector of the complex.

The protein resides in the cell inner membrane. The enzyme catalyses a quinone + NADH + 5 H(+)(in) = a quinol + NAD(+) + 4 H(+)(out). Its function is as follows. NDH-1 shuttles electrons from NADH, via FMN and iron-sulfur (Fe-S) centers, to quinones in the respiratory chain. The immediate electron acceptor for the enzyme in this species is believed to be ubiquinone. Couples the redox reaction to proton translocation (for every two electrons transferred, four hydrogen ions are translocated across the cytoplasmic membrane), and thus conserves the redox energy in a proton gradient. The sequence is that of NADH-quinone oxidoreductase subunit D from Brucella abortus (strain S19).